The primary structure comprises 299 residues: Acetylglutamate kinase (299 aa).

Residues 70-71 (GG), R92, and N186 contribute to the substrate site.

It belongs to the acetylglutamate kinase family. ArgB subfamily.

It localises to the cytoplasm. It carries out the reaction N-acetyl-L-glutamate + ATP = N-acetyl-L-glutamyl 5-phosphate + ADP. It functions in the pathway amino-acid biosynthesis; L-arginine biosynthesis; N(2)-acetyl-L-ornithine from L-glutamate: step 2/4. Its function is as follows. Catalyzes the ATP-dependent phosphorylation of N-acetyl-L-glutamate. The sequence is that of Acetylglutamate kinase from Thermoanaerobacter pseudethanolicus (strain ATCC 33223 / 39E) (Clostridium thermohydrosulfuricum).